We begin with the raw amino-acid sequence, 195 residues long: Large ribosomal subunit protein uL11m (195 aa).

This sequence belongs to the universal ribosomal protein uL11 family. As to quaternary structure, component of the mitochondrial ribosome large subunit (39S) which comprises a 16S rRNA and about 50 distinct proteins.

Its subcellular location is the mitochondrion. The polypeptide is Large ribosomal subunit protein uL11m (mrpl-11) (Caenorhabditis elegans).